The chain runs to 185 residues: Threonylcarbamoyl-AMP synthase (185 aa).

Residues 5 to 185 (ADRIADAVAA…DLQSGETLRR (181 aa)) form the YrdC-like domain.

This sequence belongs to the SUA5 family. TsaC subfamily.

Its subcellular location is the cytoplasm. The enzyme catalyses L-threonine + hydrogencarbonate + ATP = L-threonylcarbamoyladenylate + diphosphate + H2O. Its function is as follows. Required for the formation of a threonylcarbamoyl group on adenosine at position 37 (t(6)A37) in tRNAs that read codons beginning with adenine. Catalyzes the conversion of L-threonine, HCO(3)(-)/CO(2) and ATP to give threonylcarbamoyl-AMP (TC-AMP) as the acyladenylate intermediate, with the release of diphosphate. The sequence is that of Threonylcarbamoyl-AMP synthase from Chromohalobacter salexigens (strain ATCC BAA-138 / DSM 3043 / CIP 106854 / NCIMB 13768 / 1H11).